The primary structure comprises 392 residues: 6-aminohexanoate-dimer hydrolase (392 aa).

A disordered region spans residues 1–22 (MNARSTGQHPARYPGAAAGEPT). S112 is an active-site residue.

It carries out the reaction [N-(6-aminohexanoyl)](n) + H2O = [N-(6-aminohexanoyl)](n-1) + 6-aminohexanoate. It catalyses the reaction N-(6-aminohexanoyl)-6-aminohexanoate + H2O = 2 6-aminohexanoate. It functions in the pathway xenobiotic degradation; nylon-6 oligomer degradation. Involved in nylon oligomer degradation. The chain is 6-aminohexanoate-dimer hydrolase from Paenarthrobacter ureafaciens.